The sequence spans 87 residues: Phosphoribosyl-ATP pyrophosphatase (87 aa).

This sequence belongs to the PRA-PH family.

It localises to the cytoplasm. The enzyme catalyses 1-(5-phospho-beta-D-ribosyl)-ATP + H2O = 1-(5-phospho-beta-D-ribosyl)-5'-AMP + diphosphate + H(+). It functions in the pathway amino-acid biosynthesis; L-histidine biosynthesis; L-histidine from 5-phospho-alpha-D-ribose 1-diphosphate: step 2/9. This chain is Phosphoribosyl-ATP pyrophosphatase, found in Pseudarthrobacter chlorophenolicus (strain ATCC 700700 / DSM 12829 / CIP 107037 / JCM 12360 / KCTC 9906 / NCIMB 13794 / A6) (Arthrobacter chlorophenolicus).